A 250-amino-acid polypeptide reads, in one-letter code: Green-light absorbing proteorhodopsin (250 aa).

The first 18 residues, 1–18 (MGKLLLILGSVIALPTFA), serve as a signal peptide directing secretion. At 19 to 29 (AGGGDLDASDY) the chain is on the extracellular side. The helical transmembrane segment at 30-53 (TGVSFWLVTAALLASTVFFFVERD) threads the bilayer. At 54–58 (RVSAK) the chain is on the cytoplasmic side. The helical transmembrane segment at 59-87 (WKTSLTVSGLVTGIAFWHYMYMRGVWIET) threads the bilayer. The Extracellular segment spans residues 88-90 (GDS). Residues 91–118 (PTVFRYIDWLLTVPLLICEFYLILAAAT) form a helical membrane-spanning segment. At 119–121 (NVA) the chain is on the cytoplasmic side. A helical membrane pass occupies residues 122 to 144 (GSLFKKLLVGSLVMLVFGYMGEA). The Extracellular segment spans residues 145-147 (GIM). The chain crosses the membrane as a helical span at residues 148 to 177 (AAWPAFIIGCLAWVYMIYELWAGEGKSACN). Topologically, residues 178–180 (TAS) are cytoplasmic. The chain crosses the membrane as a helical span at residues 181–208 (PAVQSAYNTMMYIIIFGWAIYPVGYFTG). Over 209–218 (YLMGDGGSAL) the chain is Extracellular. A helical transmembrane segment spans residues 219–249 (NLNLIYNLADFVNKILFGLIIWNVAVKESSN). Position 232 is an N6-(retinylidene)lysine (K232). Residue A250 is a topological domain, cytoplasmic.

This sequence belongs to the archaeal/bacterial/fungal opsin family. As to quaternary structure, homopentamer. GPR protomers assemble into a pentamer around a central pore with a C5 symmetry axis. Post-translationally, contains one covalently linked retinal chromophore per subunit.

Its subcellular location is the cell membrane. Its function is as follows. Light-driven proton pump. In Unknown prokaryotic organism, this protein is Green-light absorbing proteorhodopsin.